The following is a 496-amino-acid chain: Glutamyl-tRNA(Gln) amidotransferase subunit A (496 aa).

Residues Lys-75 and Ser-150 each act as charge relay system in the active site. Ser-174 acts as the Acyl-ester intermediate in catalysis.

The protein belongs to the amidase family. GatA subfamily. As to quaternary structure, heterotrimer of A, B and C subunits.

It carries out the reaction L-glutamyl-tRNA(Gln) + L-glutamine + ATP + H2O = L-glutaminyl-tRNA(Gln) + L-glutamate + ADP + phosphate + H(+). Functionally, allows the formation of correctly charged Gln-tRNA(Gln) through the transamidation of misacylated Glu-tRNA(Gln) in organisms which lack glutaminyl-tRNA synthetase. The reaction takes place in the presence of glutamine and ATP through an activated gamma-phospho-Glu-tRNA(Gln). The chain is Glutamyl-tRNA(Gln) amidotransferase subunit A from Burkholderia mallei (strain NCTC 10247).